Reading from the N-terminus, the 387-residue chain is Carboxynorspermidine/carboxyspermidine decarboxylase (387 aa).

At Lys-51 the chain carries N6-(pyridoxal phosphate)lysine. The substrate site is built by Glu-248 and Asp-284.

It belongs to the Orn/Lys/Arg decarboxylase class-II family. NspC subfamily. Homodimer. It depends on pyridoxal 5'-phosphate as a cofactor.

It localises to the cytoplasm. It carries out the reaction carboxynorspermidine + H(+) = norspermidine + CO2. The enzyme catalyses carboxyspermidine + H(+) = spermidine + CO2. In terms of biological role, catalyzes the decarboxylation of carboxynorspermidine and carboxyspermidine. Essential for biofilm formation. This Vibrio cholerae serotype O1 (strain ATCC 39315 / El Tor Inaba N16961) protein is Carboxynorspermidine/carboxyspermidine decarboxylase.